The chain runs to 307 residues: 4-hydroxythreonine-4-phosphate dehydrogenase (307 aa).

Substrate contacts are provided by histidine 126 and threonine 127. The a divalent metal cation site is built by histidine 156, histidine 195, and histidine 251. 3 residues coordinate substrate: lysine 259, asparagine 268, and arginine 277.

Belongs to the PdxA family. In terms of assembly, homodimer. Zn(2+) serves as cofactor. It depends on Mg(2+) as a cofactor. The cofactor is Co(2+).

The protein resides in the cytoplasm. It catalyses the reaction 4-(phosphooxy)-L-threonine + NAD(+) = 3-amino-2-oxopropyl phosphate + CO2 + NADH. The protein operates within cofactor biosynthesis; pyridoxine 5'-phosphate biosynthesis; pyridoxine 5'-phosphate from D-erythrose 4-phosphate: step 4/5. In terms of biological role, catalyzes the NAD(P)-dependent oxidation of 4-(phosphooxy)-L-threonine (HTP) into 2-amino-3-oxo-4-(phosphooxy)butyric acid which spontaneously decarboxylates to form 3-amino-2-oxopropyl phosphate (AHAP). The polypeptide is 4-hydroxythreonine-4-phosphate dehydrogenase (Helicobacter pylori (strain J99 / ATCC 700824) (Campylobacter pylori J99)).